Consider the following 444-residue polypeptide: Ribulose bisphosphate carboxylase (444 aa).

The active-site Proton acceptor is the K163. Residue K165 coordinates substrate. Mg(2+) is bound by residues K189, D191, and E192. K189 is modified (N6-carboxylysine). H281 acts as the Proton acceptor in catalysis. Residues R282, H314, 367 to 369, and 389 to 392 each bind substrate; these read SGG and QLGG.

The protein belongs to the RuBisCO large chain family. Type III subfamily. As to quaternary structure, homodecamer, consisting of five dimer units which form a ring-like pentagonal structure. This arrangement is essential for its high thermostability. In contrast to form I RuBisCO, the form III RuBisCO is composed solely of large subunits. Mg(2+) is required as a cofactor.

It carries out the reaction 2 (2R)-3-phosphoglycerate + 2 H(+) = D-ribulose 1,5-bisphosphate + CO2 + H2O. The enzyme catalyses D-ribulose 1,5-bisphosphate + O2 = 2-phosphoglycolate + (2R)-3-phosphoglycerate + 2 H(+). Its function is as follows. Catalyzes the addition of molecular CO(2) and H(2)O to ribulose 1,5-bisphosphate (RuBP), generating two molecules of 3-phosphoglycerate (3-PGA). Functions in an archaeal AMP degradation pathway, together with AMP phosphorylase and R15P isomerase. The chain is Ribulose bisphosphate carboxylase from Thermococcus kodakarensis (strain ATCC BAA-918 / JCM 12380 / KOD1) (Pyrococcus kodakaraensis (strain KOD1)).